The chain runs to 421 residues: Histidine--tRNA ligase (421 aa).

This sequence belongs to the class-II aminoacyl-tRNA synthetase family.

The protein resides in the cytoplasm. It carries out the reaction tRNA(His) + L-histidine + ATP = L-histidyl-tRNA(His) + AMP + diphosphate + H(+). The protein is Histidine--tRNA ligase of Pyrobaculum calidifontis (strain DSM 21063 / JCM 11548 / VA1).